The sequence spans 498 residues: Minor fimbrium subunit Mfa1 (498 aa).

Residues 1–19 (MKLNKMFLVGALLSLGFAS) form the signal peptide. C20 carries the N-palmitoyl cysteine lipid modification. C20 is lipidated: S-diacylglycerol cysteine. The propeptide occupies 20–50 (CSKEGNGPAPDSSSTADTHMSVSMSLPQHNR). The tract at residues 436–476 (SGNPFVPTDPDPNNPDTPDNPDTPDPEDPDTPNPEEPLPVQ) is disordered.

This sequence belongs to the bacteroidetes fimbrillin superfamily. FimA/Mfa1 family. In terms of assembly, structural component of the fimbrial stalk. Minor fimbriae are composed of a structural subunit, such as the 53 kDa fimbrillin, and the accessory subunits Mfa3, Mfa4 and Mfa5. Fimbrium assembly occurs by linear, head-to-tail oligomerization of fimbrial subunits. This is mediated via insertion of a C-terminal beta-strand from one subunit into a groove in the N-terminal domain of the following subunit.

The protein resides in the fimbrium. The protein localises to the cell outer membrane. Functionally, structural subunit of the minor fimbriae. These filamentous pili are attached to the cell surface; they mediate biofilm formation, adhesion onto host cells and onto other bacteria that are part of the oral microbiome. They play an important role in invasion of periodontal tissues and are recognized as major virulence factors. Mfa1 orthologs from different strains have highly divergent sequences, and this correlates with pathogenicity. This chain is Minor fimbrium subunit Mfa1, found in Porphyromonas gingivalis (Bacteroides gingivalis).